Reading from the N-terminus, the 121-residue chain is Small ribosomal subunit protein uS13 (121 aa).

Residues 97 to 121 (VRGQRTRTNARTRRGARKTVAGKKK) form a disordered region. The segment covering 100-121 (QRTRTNARTRRGARKTVAGKKK) has biased composition (basic residues).

Belongs to the universal ribosomal protein uS13 family. Part of the 30S ribosomal subunit. Forms a loose heterodimer with protein S19. Forms two bridges to the 50S subunit in the 70S ribosome.

Its function is as follows. Located at the top of the head of the 30S subunit, it contacts several helices of the 16S rRNA. In the 70S ribosome it contacts the 23S rRNA (bridge B1a) and protein L5 of the 50S subunit (bridge B1b), connecting the 2 subunits; these bridges are implicated in subunit movement. Contacts the tRNAs in the A and P-sites. This Prochlorococcus marinus (strain MIT 9303) protein is Small ribosomal subunit protein uS13.